The sequence spans 156 residues: Small ribosomal subunit protein uS7 (156 aa).

Belongs to the universal ribosomal protein uS7 family. As to quaternary structure, part of the 30S ribosomal subunit. Contacts proteins S9 and S11.

In terms of biological role, one of the primary rRNA binding proteins, it binds directly to 16S rRNA where it nucleates assembly of the head domain of the 30S subunit. Is located at the subunit interface close to the decoding center, probably blocks exit of the E-site tRNA. The chain is Small ribosomal subunit protein uS7 from Thermosynechococcus vestitus (strain NIES-2133 / IAM M-273 / BP-1).